The sequence spans 184 residues: Glutathione-regulated potassium-efflux system ancillary protein KefG (184 aa).

This sequence belongs to the NAD(P)H dehydrogenase (quinone) family. KefG subfamily. Interacts with KefB.

The protein localises to the cell inner membrane. It catalyses the reaction a quinone + NADH + H(+) = a quinol + NAD(+). The enzyme catalyses a quinone + NADPH + H(+) = a quinol + NADP(+). In terms of biological role, regulatory subunit of a potassium efflux system that confers protection against electrophiles. Required for full activity of KefB. The sequence is that of Glutathione-regulated potassium-efflux system ancillary protein KefG from Escherichia coli O1:K1 / APEC.